Here is a 254-residue protein sequence, read N- to C-terminus: Ribonuclease HII (254 aa).

One can recognise an RNase H type-2 domain in the interval 70–254 (TCIAGIDEAG…SFAPVKSVIS (185 aa)). 3 residues coordinate a divalent metal cation: Asp76, Glu77, and Asp168.

Belongs to the RNase HII family. It depends on Mn(2+) as a cofactor. Requires Mg(2+) as cofactor.

The protein localises to the cytoplasm. It carries out the reaction Endonucleolytic cleavage to 5'-phosphomonoester.. Endonuclease that specifically degrades the RNA of RNA-DNA hybrids. The sequence is that of Ribonuclease HII from Bacillus pumilus (strain SAFR-032).